The following is a 74-amino-acid chain: Conotoxin Im6.10 (74 aa).

The first 19 residues, Met1–Gly19, serve as a signal peptide directing secretion. The propeptide occupies Ser20–Arg47. Disulfide bonds link Cys49–Cys58, Cys52–Cys63, and Cys57–Cys73.

In terms of tissue distribution, expressed by the venom duct.

It localises to the secreted. In terms of biological role, probable neurotoxin. The chain is Conotoxin Im6.10 from Conus imperialis (Imperial cone).